A 371-amino-acid polypeptide reads, in one-letter code: Surface protein P12p (371 aa).

The signal sequence occupies residues 1–20; the sequence is MHIVSFIIFFFALFFPISIC. 6-Cys domains are found at residues 23 to 168 and 169 to 343; these read INGV…LKKN and ILYG…FSNQ. 4 cysteine pairs are disulfide-bonded: Cys-27–Cys-62, Cys-76–Cys-144, Cys-93–Cys-142, and Cys-173–Cys-245. N-linked (GlcNAc...) asparagine glycosylation is present at Asn-184. Positions 202-239 are disordered; the sequence is GNNNNDDDNNDDDNNNDNNNNDNNNNNNNNNNNNNNNN. A compositionally biased stretch (acidic residues) spans 206-216; that stretch reads NDDDNNDDDNN. The segment covering 217 to 239 has biased composition (low complexity); that stretch reads NDNNNNDNNNNNNNNNNNNNNNN. N-linked (GlcNAc...) asparagine glycosylation is found at Asn-242 and Asn-246. Intrachain disulfides connect Cys-260–Cys-323 and Cys-271–Cys-321.

It is found in the cell surface. The protein resides in the cell membrane. The protein is Surface protein P12p (PFS12P) of Plasmodium falciparum (isolate 3D7).